The primary structure comprises 76 residues: UPF0291 protein MW2494 (76 aa).

It belongs to the UPF0291 family.

It is found in the cytoplasm. The polypeptide is UPF0291 protein MW2494 (Staphylococcus aureus (strain MW2)).